Reading from the N-terminus, the 179-residue chain is Putative 5'(3')-deoxyribonucleotidase (179 aa).

Aspartate 9 acts as the Nucleophile in catalysis. The Mg(2+) site is built by aspartate 9, aspartate 11, and aspartate 135. The Proton donor role is filled by aspartate 11.

This sequence belongs to the 5'(3')-deoxyribonucleotidase family. Requires Mg(2+) as cofactor.

Dephosphorylates the 5' and 2'(3')-phosphates of deoxyribonucleotides. This is Putative 5'(3')-deoxyribonucleotidase from Staphylococcus epidermidis (strain ATCC 12228 / FDA PCI 1200).